A 336-amino-acid chain; its full sequence is MSNHLSSDSDISSTESMLCGGIAGMVSRFCIAPLDVVKIRLQLQKDGSRYYRGIFQTMQQIVRDEGVTALWKGNIPAELLYVFYGATQFVTYHHVNQVINAYNETAEKWKISSGAQSFIAGATAGAGATIATYPFDLFRTLFAAQGAKNCNVKNYTSLFQTFKLIYKTEGPLGFFRGVSSSIISIAPYMGLFFASYGRVKDSLDAFSNKHHDLLVSYNLPTKGWQEATAGLCAGTASKALVFPLDTIRKRLQTQGRMDVSYKELSGKPGVQRLLDSYNPFVMARRIIVAEGCRGLYKGFLVSLIKSAPTSAITMYTFEKSLSILRWWKAQGKSLEA.

Solcar repeat units lie at residues 11–98, 112–202, and 221–323; these read ISST…VNQV, SSGA…VKDS, and TKGW…SLSI. The next 6 helical transmembrane spans lie at 17–37, 66–86, 118–138, 177–197, 228–244, and 298–315; these read MLCG…LDVV, GVTA…FYGA, FIAG…FDLF, GVSS…ASYG, TAGL…VFPL, and GFLV…ITMY.

The protein belongs to the mitochondrial carrier (TC 2.A.29) family.

Its subcellular location is the mitochondrion inner membrane. Functionally, mitochondrial transporter that mediates uptake of thiamine pyrophosphate (ThPP) into mitochondria. This is Mitochondrial thiamine pyrophosphate carrier 1 (TPC1) from Yarrowia lipolytica (strain CLIB 122 / E 150) (Yeast).